We begin with the raw amino-acid sequence, 223 residues long: Voltage-dependent calcium channel gamma-1 subunit (223 aa).

Topologically, residues 1–10 (MSQTKTAKVR) are cytoplasmic. A helical transmembrane segment spans residues 11–29 (VTLFFILAGGVLAMVAVVT). Topologically, residues 30–109 (DHWAVLSPHL…TQKEYSISAA (80 aa)) are extracellular. N-linked (GlcNAc...) asparagine glycosylation is found at Asn-43 and Asn-80. The cysteines at positions 57 and 81 are disulfide-linked. The helical transmembrane segment at 110 to 130 (AIAIFSLGFIIIGSICAFLSF) threads the bilayer. At 131 to 135 (GNKRD) the chain is on the cytoplasmic side. A helical transmembrane segment spans residues 136-156 (YLLRPASMFYAFAGLCLIVSV). Residues 157-180 (EVMRQSVKRMIDSEDTVWIEYYYS) are Extracellular-facing. Residues 181-205 (WSFACACAGFTLLFLGGLFLLLFSL) traverse the membrane as a helical segment. Topologically, residues 206–223 (PRMPQNPWESCMDTESEH) are cytoplasmic.

The protein belongs to the PMP-22/EMP/MP20 family. CACNG subfamily. As to quaternary structure, component of a calcium channel complex consisting of a pore-forming alpha subunit (CACNA1S) and the ancillary subunits CACNB1 or CACNB2, CACNG1 and CACNA2D1. The channel complex contains alpha, beta, gamma and delta subunits in a 1:1:1:1 ratio, i.e. it contains either CACNB1 or CACNB2. Post-translationally, N-glycosylated. Skeletal muscle.

The protein localises to the cell membrane. It localises to the sarcolemma. In terms of biological role, regulatory subunit of the voltage-gated calcium channel that gives rise to L-type calcium currents in skeletal muscle. Regulates channel inactivation kinetics. This is Voltage-dependent calcium channel gamma-1 subunit (Cacng1) from Rattus norvegicus (Rat).